The following is a 512-amino-acid chain: Gustatory and odorant receptor 63a (512 aa).

A disordered region spans residues 1–24; sequence MRPSGEKVVKGHGQGNSGHSLSGM. Topologically, residues 1–129 are cytoplasmic; sequence MRPSGEKVVK…PARAKFEMNS (129 aa). The helical transmembrane segment at 130 to 150 threads the bilayer; it reads ASFIYSVVFFVLLACYVGYVA. The Extracellular portion of the chain corresponds to 151 to 166; sequence NNRIHIVRSLSGPFEE. The helical transmembrane segment at 167–187 threads the bilayer; the sequence is AVIAYLFLVNILPIMIIPILW. Residues 188-222 lie on the Cytoplasmic side of the membrane; that stretch reads YEARKIAKLFNDWDDFEVLYYQISGHSLPLKLRQK. Residues 223 to 243 traverse the membrane as a helical segment; sequence AVYIAIVLPILSVLSVVITHV. At 244 to 265 the chain is on the extracellular side; sequence TMSDLNINQVVPYCILDNLTAM. N-linked (GlcNAc...) asparagine glycosylation occurs at Asn-261. The chain crosses the membrane as a helical span at residues 266 to 285; it reads LGAWWFLICEAMSITAHLLA. Topologically, residues 286-324 are cytoplasmic; the sequence is ERFQKALKHIGPAAMVADYRVLWLRLSKLTRDTGNALCY. Residues 325 to 345 form a helical membrane-spanning segment; it reads TFVFMSLYLFFIITLSIYGLM. Over 346–350 the chain is Extracellular; that stretch reads SQLSE. The helical transmembrane segment at 351 to 371 threads the bilayer; sequence GFGIKDIGLTITALWNIGLLF. Residues 372 to 436 are Cytoplasmic-facing; sequence YICDEAHYAS…FFDVNRTLFK (65 aa). The chain crosses the membrane as a helical span at residues 437 to 457; that stretch reads GLLTTMVTYLVVLLQFQISIP. Topologically, residues 458–512 are extracellular; the sequence is TDKGDSEGANNITVVDFVMDSLDNDMSLMGASTLSTTTVGTTLPPPIMKLKGRKG. Asn-468 carries an N-linked (GlcNAc...) asparagine glycan.

The protein belongs to the insect chemoreceptor superfamily. Gustatory receptor (GR) family. Gr21a subfamily. Gr21a and Gr63a probably form a heterodimer that responds to CO(2). In terms of tissue distribution, expressed in the medial aspect of the third antennal segment. Carbon dioxide-responsive neurons coexpress Gr21a and Gr63a in a pair of chemosensory receptors at both larval and adult life stages.

It is found in the cell membrane. Its function is as follows. Gustatory and odorant receptor which mediates acceptance or avoidance behavior, depending on its substrates. Gr21a and Gr63a together are sufficient for carbon dioxide detection and avoidance behavior. It is possible that the CO(2) receptors Gr63a and Gr21a activate the TRPC channels through Galpha49B and Plc21C. This innate olfactory avoidance behavior can be inhibited by inhibitory interactions of the odors such as 1-hexanol and 2,3-butanedione with Gr21a and Gr63a. The sequence is that of Gustatory and odorant receptor 63a (Gr63a) from Drosophila melanogaster (Fruit fly).